The following is a 287-amino-acid chain: ATP synthase gamma chain (287 aa).

It belongs to the ATPase gamma chain family. As to quaternary structure, F-type ATPases have 2 components, CF(1) - the catalytic core - and CF(0) - the membrane proton channel. CF(1) has five subunits: alpha(3), beta(3), gamma(1), delta(1), epsilon(1). CF(0) has three main subunits: a, b and c.

The protein localises to the cell inner membrane. Functionally, produces ATP from ADP in the presence of a proton gradient across the membrane. The gamma chain is believed to be important in regulating ATPase activity and the flow of protons through the CF(0) complex. This chain is ATP synthase gamma chain, found in Pectobacterium carotovorum subsp. carotovorum (strain PC1).